A 293-amino-acid polypeptide reads, in one-letter code: 33 kDa chaperonin (293 aa).

2 cysteine pairs are disulfide-bonded: Cys230–Cys232 and Cys263–Cys266.

This sequence belongs to the HSP33 family. Under oxidizing conditions two disulfide bonds are formed involving the reactive cysteines. Under reducing conditions zinc is bound to the reactive cysteines and the protein is inactive.

The protein localises to the cytoplasm. Functionally, redox regulated molecular chaperone. Protects both thermally unfolding and oxidatively damaged proteins from irreversible aggregation. Plays an important role in the bacterial defense system toward oxidative stress. This Edwardsiella ictaluri (strain 93-146) protein is 33 kDa chaperonin.